A 117-amino-acid chain; its full sequence is MRVKRGLASHRRHKKYLDAAKGFRGGRSKLYRTAREAVERSWMYAFRDRKVKKREFRKLWILRINAGARMHGLSYSKFMHGLTLAGISLNRKVLADLAVREKEDFAKLAQLAASKLN.

The protein belongs to the bacterial ribosomal protein bL20 family.

Its function is as follows. Binds directly to 23S ribosomal RNA and is necessary for the in vitro assembly process of the 50S ribosomal subunit. It is not involved in the protein synthesizing functions of that subunit. The polypeptide is Large ribosomal subunit protein bL20 (Nitratidesulfovibrio vulgaris (strain DSM 19637 / Miyazaki F) (Desulfovibrio vulgaris)).